A 524-amino-acid polypeptide reads, in one-letter code: Bifunctional purine biosynthesis protein PurH (524 aa).

Residues 1 to 145 (MIKQALLSVS…KNHRDVTVIV (145 aa)) enclose the MGS-like domain.

Belongs to the PurH family.

The enzyme catalyses (6R)-10-formyltetrahydrofolate + 5-amino-1-(5-phospho-beta-D-ribosyl)imidazole-4-carboxamide = 5-formamido-1-(5-phospho-D-ribosyl)imidazole-4-carboxamide + (6S)-5,6,7,8-tetrahydrofolate. It catalyses the reaction IMP + H2O = 5-formamido-1-(5-phospho-D-ribosyl)imidazole-4-carboxamide. It participates in purine metabolism; IMP biosynthesis via de novo pathway; 5-formamido-1-(5-phospho-D-ribosyl)imidazole-4-carboxamide from 5-amino-1-(5-phospho-D-ribosyl)imidazole-4-carboxamide (10-formyl THF route): step 1/1. It functions in the pathway purine metabolism; IMP biosynthesis via de novo pathway; IMP from 5-formamido-1-(5-phospho-D-ribosyl)imidazole-4-carboxamide: step 1/1. The sequence is that of Bifunctional purine biosynthesis protein PurH from Cupriavidus metallidurans (strain ATCC 43123 / DSM 2839 / NBRC 102507 / CH34) (Ralstonia metallidurans).